Consider the following 382-residue polypeptide: Anhydro-N-acetylmuramic acid kinase (382 aa).

9–16 provides a ligand contact to ATP; the sequence is GTSLDGID.

It belongs to the anhydro-N-acetylmuramic acid kinase family.

The enzyme catalyses 1,6-anhydro-N-acetyl-beta-muramate + ATP + H2O = N-acetyl-D-muramate 6-phosphate + ADP + H(+). It participates in amino-sugar metabolism; 1,6-anhydro-N-acetylmuramate degradation. It functions in the pathway cell wall biogenesis; peptidoglycan recycling. Functionally, catalyzes the specific phosphorylation of 1,6-anhydro-N-acetylmuramic acid (anhMurNAc) with the simultaneous cleavage of the 1,6-anhydro ring, generating MurNAc-6-P. Is required for the utilization of anhMurNAc either imported from the medium or derived from its own cell wall murein, and thus plays a role in cell wall recycling. The protein is Anhydro-N-acetylmuramic acid kinase of Bacillus anthracis (strain A0248).